The following is a 194-amino-acid chain: Leucyl/phenylalanyl-tRNA--protein transferase (194 aa).

It belongs to the L/F-transferase family.

Its subcellular location is the cytoplasm. It carries out the reaction N-terminal L-lysyl-[protein] + L-leucyl-tRNA(Leu) = N-terminal L-leucyl-L-lysyl-[protein] + tRNA(Leu) + H(+). It catalyses the reaction N-terminal L-arginyl-[protein] + L-leucyl-tRNA(Leu) = N-terminal L-leucyl-L-arginyl-[protein] + tRNA(Leu) + H(+). The catalysed reaction is L-phenylalanyl-tRNA(Phe) + an N-terminal L-alpha-aminoacyl-[protein] = an N-terminal L-phenylalanyl-L-alpha-aminoacyl-[protein] + tRNA(Phe). Its function is as follows. Functions in the N-end rule pathway of protein degradation where it conjugates Leu, Phe and, less efficiently, Met from aminoacyl-tRNAs to the N-termini of proteins containing an N-terminal arginine or lysine. This is Leucyl/phenylalanyl-tRNA--protein transferase from Pelodictyon phaeoclathratiforme (strain DSM 5477 / BU-1).